Consider the following 780-residue polypeptide: Cullin-5 (780 aa).

Ser34 bears the Phosphoserine mark. Thr210 carries the phosphothreonine modification. The Cullin neddylation domain maps to 711 to 772 (RILRTQEAII…HKYIRRDESD (62 aa)). Lys724 is covalently cross-linked (Glycyl lysine isopeptide (Lys-Gly) (interchain with G-Cter in NEDD8)).

The protein belongs to the cullin family. In terms of assembly, component of multiple cullin-5-RING E3 ubiquitin-protein ligase complexes (ECS complexes, also named CRL5 complexes) formed of CUL5, Elongin BC (ELOB and ELOC), RNF7/RBX2 and a variable SOCS box domain-containing protein as substrate-specific recognition component. CUL5-containing ECS complexes specifically contain RNF7/RBX2, and not RBX1, as catalytic subunit. Component of the ECS(ASB2) complex with the substrate recognition component ASB2. Component of the ECS(ASB6) complex with the substrate recognition component ASB6. Component of the ECS(ASB7) complex with the substrate recognition component ASB7. Component of the ECS(ASB9) complex with the substrate recognition component ASB9. Component of the ECS(ASB11) complex with the substrate recognition component ASB11. Component of the ECS(ASB12) complex with the substrate recognition component ASB12. Component of the ECS(LRRC41) complex with the substrate recognition component LRRC41. Component of the ECS(SOCS1) complex with the substrate recognition component SOCS1. Component of the ECS(SOCS2) complex with the substrate recognition component SOCS2. Component of the ECS(WSB1) complex with the substrate recognition subunit WSB1. Component of the ECS(SOCS3) complex with the substrate recognition component SOCS3. Component of the ECS(SOCS7) complex with the substrate recognition component SOCS7. Component of the ECS(SPSB1) complex with the substrate recognition component SPSB1. Component of the ECS(SPSB3) complex with the substrate recognition component SPSB3. Component of the ECS(SPSB2) complex with the substrate recognition component SPSB2. Component of the ECS(SPSB4) complex with the substrate recognition component SPSB4. Component of the ECS(RAB40) complex with the substrate recognition subunit RAB40A, RAB40B or RAB40C. Component of the ECS(KLHDC1) complex with the substrate recognition component KLHDC1. Component of the ECS(PCMTD1) complex with the substrate recognition subunit PCMTD1. May also form complexes containing RBX1 and ELOA or VHL; additional evidence is however required to confirm this result in vivo. Interacts (when neddylated) with ARIH2; leading to activate the E3 ligase activity of ARIH2. Interacts with ERCC6; the interaction is induced by DNA damaging agents or inhibitors of RNA polymerase II elongation. Interacts with ELOA (via the BC-box). Interacts (unneddylated form) with DCUN1D1, DCUN1D2, DCUN1D3, DCUN1D4 and DCUN1D5; these interactions promote the cullin neddylation. As to quaternary structure, (Microbial infection) Interacts (via the substrate recognition component) with HIV-1 Vif; forming an active cullin-5-RING E3 ubiquitin-protein ligase complex (ECS complex). (Microbial infection) Interacts (via the substrate recognition component) with human adenovirus 5 proteins E1B-55K and E4-orf6. In terms of assembly, (Microbial infection) Interacts with herpes virus 8 protein LANA1; this interaction promotes the degradation of NF-kappa-B component RELA. As to quaternary structure, (Microbial infection) Interacts with molluscum contagiosum virus protein MC132; this interaction promotes the degradation of NF-kappa-B component RELA. Post-translationally, neddylated; which enhances the ubiquitination activity of ECS complexes and prevents binding of the inhibitor CAND1. Deneddylated via its interaction with the COP9 signalosome (CSN).

It is found in the nucleus. It functions in the pathway protein modification; protein ubiquitination. In terms of biological role, core component of multiple cullin-5-RING E3 ubiquitin-protein ligase complexes (ECS complexes, also named CRL5 complexes), which mediate the ubiquitination and subsequent proteasomal degradation of target proteins. Acts a scaffold protein that contributes to catalysis through positioning of the substrate and the ubiquitin-conjugating enzyme. The functional specificity of the E3 ubiquitin-protein ligase complex depends on the variable SOCS box-containing substrate recognition component. Acts as a key regulator of neuron positioning during cortex development: component of various SOCS-containing ECS complexes, such as the ECS(SOCS7) complex, that regulate reelin signaling by mediating ubiquitination and degradation of DAB1. ECS(SOCS1) seems to direct ubiquitination of JAK2. The ECS(SOCS2) complex mediates the ubiquitination and subsequent proteasomal degradation of phosphorylated EPOR and GHR. The ECS(SPSB3) complex catalyzes ubiquitination of nuclear CGAS. ECS(KLHDC1) complex is part of the DesCEND (destruction via C-end degrons) pathway and mediates ubiquitination and degradation of truncated SELENOS selenoprotein produced by failed UGA/Sec decoding, which ends with a glycine. The ECS(ASB9) complex mediates ubiquitination and degradation of CKB. As part of some ECS complex, promotes 'Lys-11'-linked ubiquitination and degradation of BTRC. As part of a multisubunit ECS complex, polyubiquitinates monoubiquitinated POLR2A. As part of the ECS(RAB40C) complex, mediates ANKRD28 ubiquitination and degradation, thereby inhibiting protein phosphatase 6 (PP6) complex activity and focal adhesion assembly during cell migration. As part of the ECS(RAB40A) complex, mediates RHOU 'Lys-48'-linked ubiquitination and degradation, thus inhibiting focal adhesion disassembly during cell migration. As part of the ECS(RAB40B) complex, mediates LIMA1/EPLIN and RAP2 ubiquitination, thereby regulating actin cytoskeleton dynamics and stress fiber formation during cell migration. May form a cell surface vasopressin receptor. Its function is as follows. (Microbial infection) Following infection by HIV-1 virus, CUL5 associates with HIV-1 Vif proteins and forms a cullin-5-RING E3 ubiquitin-protein ligase complex (ECS complex) that catalyzes ubiquitination and degradation of APOBEC3F and APOBEC3G. The complex can also ubiquitinate APOBEC3H to some extent. (Microbial infection) Seems to be involved in proteasomal degradation of p53/TP53 stimulated by adenovirus E1B-55 kDa protein. This Homo sapiens (Human) protein is Cullin-5.